Reading from the N-terminus, the 843-residue chain is RNA-binding protein 25 (843 aa).

The tract at residues Met1–Pro30 is disordered. A compositionally biased stretch (pro residues) spans Met12 to Pro30. The RRM domain maps to Thr87–Lys164. Residue Lys135 is modified to N6-acetyllysine. 2 disordered regions span residues Glu171–Arg202 and Ser219–Asp243. Ser226 and Ser229 each carry phosphoserine. Residues Lys261, Lys273, and Lys430 each participate in a glycyl lysine isopeptide (Lys-Gly) (interchain with G-Cter in SUMO2) cross-link. Basic and acidic residues-rich tracts occupy residues Glu280–Arg433 and Arg521–Arg573. 2 disordered regions span residues Glu280–Glu442 and Glu498–Lys688. The tract at residues Arg285 to Cys644 is necessary for nuclear speckle localization. A Glycyl lysine isopeptide (Lys-Gly) (interchain with G-Cter in SUMO2) cross-link involves residue Lys578. Position 583 is a phosphoserine (Ser583). The segment covering Lys590 to Glu599 has biased composition (basic and acidic residues). Low complexity predominate over residues Ser621–Ser630. Lys671 participates in a covalent cross-link: Glycyl lysine isopeptide (Lys-Gly) (interchain with G-Cter in SUMO2). Residues Ala674–Ser683 are compositionally biased toward polar residues. Ser677 and Ser683 each carry phosphoserine. Residues Lys688 and Lys697 each participate in a glycyl lysine isopeptide (Lys-Gly) (interchain with G-Cter in SUMO2) cross-link. Residue Ser703 is modified to Phosphoserine. Residue Lys722 forms a Glycyl lysine isopeptide (Lys-Gly) (interchain with G-Cter in SUMO2) linkage. One can recognise a PWI domain in the interval Pro750–Lys843.

In terms of assembly, interacts with LUC7L3 and SRRM1. Specifically associates with functional splicing complexes, including Sm proteins and U1, U2, U4, U5 and U6 snRNAs. Associates with exon junction complex (EJC) proteins, including APEX1, DDX39B, NCBP1, RBM8A and RNPS1. Interaction with NCBP1 is RNA-dependent. In terms of processing, sumoylated.

The protein resides in the nucleus speckle. It localises to the cytoplasm. In terms of biological role, RNA-binding protein that acts as a regulator of alternative pre-mRNA splicing. Involved in apoptotic cell death through the regulation of the apoptotic factor BCL2L1 isoform expression. Modulates the ratio of proapoptotic BCL2L1 isoform S to antiapoptotic BCL2L1 isoform L mRNA expression. When overexpressed, stimulates proapoptotic BCL2L1 isoform S 5'-splice site (5'-ss) selection, whereas its depletion caused the accumulation of antiapoptotic BCL2L1 isoform L. Promotes BCL2L1 isoform S 5'-ss usage through the 5'-CGGGCA-3' RNA sequence. Its association with LUC7L3 promotes U1 snRNP binding to a weak 5' ss in a 5'-CGGGCA-3'-dependent manner. Binds to the exonic splicing enhancer 5'-CGGGCA-3' RNA sequence located within exon 2 of the BCL2L1 pre-mRNA. Also involved in the generation of an abnormal and truncated splice form of SCN5A in heart failure. The chain is RNA-binding protein 25 (RBM25) from Homo sapiens (Human).